A 186-amino-acid chain; its full sequence is Cytochrome c oxidase polypeptide 5, mitochondrial (186 aa).

The transit peptide at 1–20 (MYLSKIICKKVPMKLLCTRN) directs the protein to the mitochondrion. Topologically, residues 21 to 107 (AATVSAAATN…GPRAFSHISQ (87 aa)) are mitochondrial matrix. Residues 108–128 (KTVFWGTVAGLTIGVVLFGLI) form a helical membrane-spanning segment. The Mitochondrial intermembrane segment spans residues 129–186 (RTQAAPSPRTMTREWQEKSNEYMKENKINPISGEASEGFKGRGQISGGIFSPSEKDKK). The interval 149–186 (EYMKENKINPISGEASEGFKGRGQISGGIFSPSEKDKK) is disordered.

The protein belongs to the cytochrome c oxidase IV family. As to quaternary structure, component of the cytochrome c oxidase (complex IV, CIV), a multisubunit enzyme composed of a catalytic core of 3 subunits and seevral supernumerary subunits. The complex exists as a monomer or a dimer and forms supercomplexes (SCs) in the inner mitochondrial membrane with ubiquinol-cytochrome c oxidoreductase (cytochrome b-c1 complex, complex III, CIII).

It localises to the mitochondrion inner membrane. It participates in energy metabolism; oxidative phosphorylation. In terms of biological role, component of the cytochrome c oxidase, the last enzyme in the mitochondrial electron transport chain which drives oxidative phosphorylation. The respiratory chain contains 3 multisubunit complexes succinate dehydrogenase (complex II, CII), ubiquinol-cytochrome c oxidoreductase (cytochrome b-c1 complex, complex III, CIII) and cytochrome c oxidase (complex IV, CIV), that cooperate to transfer electrons derived from NADH and succinate to molecular oxygen, creating an electrochemical gradient over the inner membrane that drives transmembrane transport and the ATP synthase. Cytochrome c oxidase is the component of the respiratory chain that catalyzes the reduction of oxygen to water. Electrons originating from reduced cytochrome c in the intermembrane space (IMS) are transferred via the dinuclear copper A center (CU(A)) of subunit 2 and heme A of subunit 1 to the active site in subunit 1, a binuclear center (BNC) formed by heme A3 and copper B (CU(B)). The BNC reduces molecular oxygen to 2 water molecules using 4 electrons from cytochrome c in the IMS and 4 protons from the mitochondrial matrix. This Schizosaccharomyces pombe (strain 972 / ATCC 24843) (Fission yeast) protein is Cytochrome c oxidase polypeptide 5, mitochondrial (cox5).